We begin with the raw amino-acid sequence, 2055 residues long: Citron Rho-interacting kinase (2055 aa).

Residue M1 is modified to N-acetylmethionine. The 263-residue stretch at F97–F359 folds into the Protein kinase domain. ATP-binding positions include V103–V111 and K126. The Proton acceptor role is filled by D221. Residues A360 to S430 enclose the AGC-kinase C-terminal domain. S432, S439, S479, and S581 each carry phosphoserine. 3 coiled-coil regions span residues A441–A1086, L1091–S1247, and A1275–T1325. Residues L1132–P1328 are interaction with Rho/Rac. Y1237 is modified (phosphotyrosine). Residues R1316–H1329 show a composition bias toward basic and acidic residues. Disordered regions lie at residues R1316–A1336 and S1348–R1377. Positions P1353–S1363 are enriched in low complexity. A compositionally biased stretch (basic and acidic residues) spans R1365 to R1377. Residues P1388 to C1437 form a Phorbol-ester/DAG-type zinc finger. The PH domain maps to S1469–A1589. The CNH domain maps to R1617–G1907. K1747 bears the N6-acetyllysine mark. The segment at S1932–R2040 is disordered. Polar residues predominate over residues V1939–N1948. The residue at position 1966 (S1966) is a Phosphoserine. Positions S1974 to R2031 are enriched in basic and acidic residues. The short motif at P1979–R1984 is the SH3-binding element. Residue S2021 is modified to Phosphoserine. The residue at position 2041 (T2041) is a Phosphothreonine.

This sequence belongs to the protein kinase superfamily. AGC Ser/Thr protein kinase family. In terms of assembly, interacts with TTC3. Homodimer. Directly interacts with KIF14 depending on the activation state (stronger interaction with the kinase-dead form). In terms of tissue distribution, a major signal was observed in testis and brain, but it was also detected in thymus, spleen, kidney, heart and lung.

Its subcellular location is the cytoplasm. The enzyme catalyses L-seryl-[protein] + ATP = O-phospho-L-seryl-[protein] + ADP + H(+). The catalysed reaction is L-threonyl-[protein] + ATP = O-phospho-L-threonyl-[protein] + ADP + H(+). Its function is as follows. Plays a role in cytokinesis. Required for KIF14 localization to the central spindle and midbody. Probable RHO/RAC effector that binds to the GTP-bound forms of RHO and RAC1. It probably binds p21 with a tighter specificity in vivo. Displays serine/threonine protein kinase activity. Plays an important role in the regulation of cytokinesis and the development of the central nervous system. Phosphorylates MYL9/MLC2. This chain is Citron Rho-interacting kinase (Cit), found in Mus musculus (Mouse).